The following is a 365-amino-acid chain: uncharacterized protein (365 aa).

31–38 (GPINSGKT) contributes to the ATP binding site.

The protein belongs to the archaeal ATPase family.

This is an uncharacterized protein from Methanocaldococcus jannaschii (strain ATCC 43067 / DSM 2661 / JAL-1 / JCM 10045 / NBRC 100440) (Methanococcus jannaschii).